The following is a 417-amino-acid chain: RH-like protein (417 aa).

The next 11 membrane-spanning stretches (helical) occupy residues 12 to 32 (CLPLWALTLEAALILLFFFFT), 44 to 64 (LVASYQVCQDLTVMAVLGLGF), 77 to 97 (VAFNLFLLALGVQWAILLDGF), 125 to 145 (ISMNAVLGKVNLVQLVVMELV), 172 to 192 (IHVFAAYFGLTVAWCLPKPLP), 203 to 223 (TSPSLFAMLGTLFLWMFWPTF), 238 to 258 (VFSTYYALAVSAVTAISVSSL), 265 to 285 (INMTYMHNAALAGGVALSASC), 287 to 307 (VIHSPWIAMVLGLVAGLISIG), 331 to 351 (TFGLPALLGEITYIVLMALRV), and 358 to 378 (MIGFQVLLSTGTLSLAMAMSI).

Belongs to the ammonium transporter (TC 2.A.49) family. Rh subfamily.

It is found in the membrane. Its function is as follows. May be part of an oligomeric complex which is likely to have a transport or channel function in the erythrocyte membrane. The protein is RH-like protein of Macaca mulatta (Rhesus macaque).